Here is a 389-residue protein sequence, read N- to C-terminus: 26S proteasome regulatory subunit 6B homolog (389 aa).

Residue 175 to 182 (GPPGTGKT) coordinates ATP.

This sequence belongs to the AAA ATPase family.

The protein resides in the cytoplasm. It is found in the nucleus. Its function is as follows. The 26S proteasome is involved in the ATP-dependent degradation of ubiquitinated proteins. The regulatory (or ATPase) complex confers ATP dependency and substrate specificity to the 26S complex. The sequence is that of 26S proteasome regulatory subunit 6B homolog (rpt3) from Schizosaccharomyces pombe (strain 972 / ATCC 24843) (Fission yeast).